We begin with the raw amino-acid sequence, 305 residues long: D-alanine--D-alanine ligase (305 aa).

An ATP-grasp domain is found at 105–300; it reads KMIWQAAGIN…FDELVVQILE (196 aa). 131 to 186 lines the ATP pocket; the sequence is ADRLGLPLIIKPAREGSTLGLNKVDNEQDFRSAYQAAAEYDSLVLAEQFIQGIELT. 3 residues coordinate Mg(2+): D254, E267, and N269.

This sequence belongs to the D-alanine--D-alanine ligase family. It depends on Mg(2+) as a cofactor. The cofactor is Mn(2+).

It localises to the cytoplasm. It catalyses the reaction 2 D-alanine + ATP = D-alanyl-D-alanine + ADP + phosphate + H(+). The protein operates within cell wall biogenesis; peptidoglycan biosynthesis. Cell wall formation. In Nitrosomonas europaea (strain ATCC 19718 / CIP 103999 / KCTC 2705 / NBRC 14298), this protein is D-alanine--D-alanine ligase.